We begin with the raw amino-acid sequence, 37 residues long: Large ribosomal subunit protein bL36c (37 aa).

This sequence belongs to the bacterial ribosomal protein bL36 family.

Its subcellular location is the plastid. It is found in the chloroplast. The protein is Large ribosomal subunit protein bL36c (rpl36) of Euglena gracilis.